Reading from the N-terminus, the 460-residue chain is GTPase Der (460 aa).

EngA-type G domains follow at residues 9-171 and 199-370; these read KTIA…SLNQ and IQVG…ECFS. Residues 15-22, 62-66, 123-126, 205-212, 252-256, and 316-319 each bind GTP; these read GQPNVGKS, DTGGM, NKID, GRVNVGKS, DTAGI, and NKWD. The KH-like domain occupies 371–455; it reads RRIPTSLLNS…PLILNAKDKK (85 aa).

It belongs to the TRAFAC class TrmE-Era-EngA-EngB-Septin-like GTPase superfamily. EngA (Der) GTPase family. Associates with the 50S ribosomal subunit.

Its function is as follows. GTPase that plays an essential role in the late steps of ribosome biogenesis. The sequence is that of GTPase Der from Helicobacter pylori (strain G27).